Here is a 326-residue protein sequence, read N- to C-terminus: tRNA dimethylallyltransferase (326 aa).

10 to 17 (GPTGTGKT) provides a ligand contact to ATP. 12–17 (TGTGKT) is a binding site for substrate. An interaction with substrate tRNA region spans residues 35–38 (DSMQ).

It belongs to the IPP transferase family. As to quaternary structure, monomer. Mg(2+) is required as a cofactor.

The enzyme catalyses adenosine(37) in tRNA + dimethylallyl diphosphate = N(6)-dimethylallyladenosine(37) in tRNA + diphosphate. In terms of biological role, catalyzes the transfer of a dimethylallyl group onto the adenine at position 37 in tRNAs that read codons beginning with uridine, leading to the formation of N6-(dimethylallyl)adenosine (i(6)A). This Dictyoglomus turgidum (strain DSM 6724 / Z-1310) protein is tRNA dimethylallyltransferase.